Consider the following 242-residue polypeptide: ATP synthase subunit a (242 aa).

A run of 6 helical transmembrane segments spans residues 29 to 49 (SAAY…LAFS), 84 to 104 (FVPV…FGMI), 114 to 134 (IIIT…VGFV), 140 to 160 (FLSL…MIII), 189 to 209 (VIAS…IPLM), and 210 to 230 (VILI…FTIL).

Belongs to the ATPase A chain family. In terms of assembly, F-type ATPases have 2 components, CF(1) - the catalytic core - and CF(0) - the membrane proton channel. CF(1) has five subunits: alpha(3), beta(3), gamma(1), delta(1), epsilon(1). CF(0) has three main subunits: a(1), b(2) and c(9-12). The alpha and beta chains form an alternating ring which encloses part of the gamma chain. CF(1) is attached to CF(0) by a central stalk formed by the gamma and epsilon chains, while a peripheral stalk is formed by the delta and b chains.

Its subcellular location is the cell inner membrane. Key component of the proton channel; it plays a direct role in the translocation of protons across the membrane. This is ATP synthase subunit a from Rickettsia bellii (strain OSU 85-389).